The primary structure comprises 397 residues: Elongation factor Tu 1 (397 aa).

The tr-type G domain occupies 10–206; it reads KPHVNIGTIG…AVDENIPQPE (197 aa). Residues 19–26 form a G1 region; sequence GHIDHGKT. 19-26 lines the GTP pocket; sequence GHIDHGKT. Threonine 26 provides a ligand contact to Mg(2+). A G2 region spans residues 62–66; it reads GITIS. The G3 stretch occupies residues 83 to 86; that stretch reads DCPG. GTP-binding positions include 83-87 and 138-141; these read DCPGH and NKAD. A G4 region spans residues 138–141; the sequence is NKAD. Residues 176–178 form a G5 region; it reads SAL.

This sequence belongs to the TRAFAC class translation factor GTPase superfamily. Classic translation factor GTPase family. EF-Tu/EF-1A subfamily. In terms of assembly, monomer.

It localises to the cytoplasm. It carries out the reaction GTP + H2O = GDP + phosphate + H(+). Functionally, GTP hydrolase that promotes the GTP-dependent binding of aminoacyl-tRNA to the A-site of ribosomes during protein biosynthesis. In Streptomyces avermitilis (strain ATCC 31267 / DSM 46492 / JCM 5070 / NBRC 14893 / NCIMB 12804 / NRRL 8165 / MA-4680), this protein is Elongation factor Tu 1.